Consider the following 318-residue polypeptide: Protein-methionine-sulfoxide reductase catalytic subunit MsrP (318 aa).

Residues 1 to 40 constitute a signal peptide (tat-type signal); it reads MNRFTRYDVTPEAIFNQRRQIIKAMGLGAAALSLPNIGFA. Mo-molybdopterin contacts are provided by residues N72, 75-76, C130, T165, N217, R222, and 233-235; these read YE and SIK.

This sequence belongs to the MsrP family. As to quaternary structure, heterodimer of a catalytic subunit (MsrP) and a heme-binding subunit (MsrQ). It depends on Mo-molybdopterin as a cofactor. In terms of processing, predicted to be exported by the Tat system. The position of the signal peptide cleavage has not been experimentally proven.

The protein resides in the periplasm. It carries out the reaction L-methionyl-[protein] + a quinone + H2O = L-methionyl-(S)-S-oxide-[protein] + a quinol. The catalysed reaction is L-methionyl-[protein] + a quinone + H2O = L-methionyl-(R)-S-oxide-[protein] + a quinol. Part of the MsrPQ system that repairs oxidized periplasmic proteins containing methionine sulfoxide residues (Met-O), using respiratory chain electrons. Thus protects these proteins from oxidative-stress damage caused by reactive species of oxygen and chlorine generated by the host defense mechanisms. MsrPQ is essential for the maintenance of envelope integrity under bleach stress, rescuing a wide series of structurally unrelated periplasmic proteins from methionine oxidation. The catalytic subunit MsrP is non-stereospecific, being able to reduce both (R-) and (S-) diastereoisomers of methionine sulfoxide. This is Protein-methionine-sulfoxide reductase catalytic subunit MsrP from Actinobacillus pleuropneumoniae serotype 5b (strain L20).